A 197-amino-acid polypeptide reads, in one-letter code: MSGKLGDDALDILFRDARTHNGWKAEPVSDETLRALYDLMKWGPTSANCSPARIIFVKSKEAKEKLAPALSEGNLKKTMAAPVTAIIGYDVEFYERLPELFPHDPTAKNWFNWSKEWAEQTAFRNGSLQGAYFMIAARSLGLDCGPMSGFDMRKVDDAFFAGTTVKVNFLCNIGHGDPSALFARSPRLSFEDACKII.

It belongs to the nitroreductase family. HadB/RutE subfamily. FMN serves as cofactor.

This chain is Putative NADH dehydrogenase/NAD(P)H nitroreductase Plav_3612, found in Parvibaculum lavamentivorans (strain DS-1 / DSM 13023 / NCIMB 13966).